A 291-amino-acid polypeptide reads, in one-letter code: uncharacterized protein (291 aa).

A run of 4 helical transmembrane segments spans residues 13–33, 84–104, 111–131, and 219–239; these read IILI…SITI, IVLF…IGII, LLHL…FIII, and LIYC…IYYL.

The protein localises to the cell membrane. This is an uncharacterized protein from Ureaplasma parvum serovar 3 (strain ATCC 700970).